Reading from the N-terminus, the 506-residue chain is MSEHFILQPGQLSLLSIKQILDEGQSCVLAESAFELINASHQTVRKVIDEKKTVYGINTGFGSLANQTISADCLKELQRNIVLSHACGTGKLLPDDVVALILLLKINNLSQGYSGVRLELINALIALFNHKVYPCIPSKGSVGASGDLVPLAHLSLPLLGEGEVRHQGQLISAEEGLKLAGLKPLELEAKEGLALLNGLQVSTALALSALFISETLFETAIISGSLSVDAASGSDVPFDDRIHQTRGHQAQISAASMYRNLLAGSQIRESHRHCNRVQDPYSLRCQPQIMGAVLHQMQFVGQTLQVEANAISDNPLVFAEQGDILSGGNFHGEIIAMAADNLALALSEIGGSAERRIALLIDKNFSGLPAFLVRESGLNSGFMIAHVTAASCASDNKALAHPHSVDSLPTSANQEDHVSMATSAARRLHEMIDNTSTILAIELLAACQGLEFHKPLKTSPQLDKIYQSVRSVVKEYDKDRYFAPDIEKIKKKILDKEFSLLTLTNE.

The 5-imidazolinone (Ala-Gly) cross-link spans 144-146; it reads ASG. Residue Ser145 is modified to 2,3-didehydroalanine (Ser).

This sequence belongs to the PAL/histidase family. Contains an active site 4-methylidene-imidazol-5-one (MIO), which is formed autocatalytically by cyclization and dehydration of residues Ala-Ser-Gly.

It is found in the cytoplasm. It catalyses the reaction L-histidine = trans-urocanate + NH4(+). The protein operates within amino-acid degradation; L-histidine degradation into L-glutamate; N-formimidoyl-L-glutamate from L-histidine: step 1/3. In Legionella pneumophila (strain Lens), this protein is Histidine ammonia-lyase.